The sequence spans 425 residues: 5'-deoxyadenosine deaminase (425 aa).

The Zn(2+) site is built by His62 and His64. Glu91 and His183 together coordinate substrate. A Zn(2+)-binding site is contributed by His210. Glu213 and Asp298 together coordinate substrate. Asp298 provides a ligand contact to Zn(2+).

It belongs to the metallo-dependent hydrolases superfamily. MTA/SAH deaminase family. In terms of assembly, homotetramer. Zn(2+) is required as a cofactor.

The catalysed reaction is 5'-deoxyadenosine + H2O + H(+) = 5'-deoxyinosine + NH4(+). The enzyme catalyses S-adenosyl-L-homocysteine + H2O + H(+) = S-inosyl-L-homocysteine + NH4(+). It carries out the reaction S-methyl-5'-thioadenosine + H2O + H(+) = S-methyl-5'-thioinosine + NH4(+). It catalyses the reaction adenosine + H2O + H(+) = inosine + NH4(+). It functions in the pathway amino-acid biosynthesis; S-adenosyl-L-methionine biosynthesis. Functionally, catalyzes the deamination of three SAM-derived enzymatic products, namely 5'-deoxyadenosine, S-adenosyl-L-homocysteine, and 5'-methylthioadenosine, to produce the inosine analogs. Can also deaminate adenosine. The preferred substrate for this enzyme is 5'-deoxyadenosine, but all these substrates are efficiently deaminated. Likely functions in a S-adenosyl-L-methionine (SAM) recycling pathway from S-adenosyl-L-homocysteine (SAH) produced from SAM-dependent methylation reactions. May also be involved in the recycling of 5'-deoxyadenosine, whereupon the 5'-deoxyribose moiety of 5'-deoxyinosine is further metabolized to deoxyhexoses used for the biosynthesis of aromatic amino acids in methanogens. The sequence is that of 5'-deoxyadenosine deaminase from Methanosphaera stadtmanae (strain ATCC 43021 / DSM 3091 / JCM 11832 / MCB-3).